The chain runs to 374 residues: Heme A synthase (374 aa).

Transmembrane regions (helical) follow at residues 22 to 42 (VAVWLLVCAGMVFAMAIIGAI), 107 to 127 (LWGRLIGVVFLLPFVWFWVRG), 135 to 155 (PTLAGLFLLGGLQGFIGWFMV), 172 to 192 (LHLGMAFLIYAALLKVALGLL), 209 to 229 (AWAALALLGVTIVWGAFVAGI), 265 to 285 (AAVQFVHRWLAVVTALVVLSL), 306 to 326 (AAATVAQVGLGIATLLSVVWI), and 327 to 347 (PLATAHQGGALVLTGLLVWTL). Heme is bound at residue H271. Residue H332 participates in heme binding.

Belongs to the COX15/CtaA family. Type 2 subfamily. In terms of assembly, interacts with CtaB. Heme b is required as a cofactor.

It is found in the cell membrane. The enzyme catalyses Fe(II)-heme o + 2 A + H2O = Fe(II)-heme a + 2 AH2. The protein operates within porphyrin-containing compound metabolism; heme A biosynthesis; heme A from heme O: step 1/1. Catalyzes the conversion of heme O to heme A by two successive hydroxylations of the methyl group at C8. The first hydroxylation forms heme I, the second hydroxylation results in an unstable dihydroxymethyl group, which spontaneously dehydrates, resulting in the formyl group of heme A. This chain is Heme A synthase, found in Rhodospirillum centenum (strain ATCC 51521 / SW).